A 362-amino-acid polypeptide reads, in one-letter code: Adenosine deaminase (362 aa).

The Zn(2+) site is built by H41 and H43. 43–45 (HLD) contributes to the a purine D-ribonucleoside binding site. Residues 169-183 (IGETGISEESLRKAA) are gating helix loop; regulates binding affinity for substrates and thus substrate selectivity. A purine D-ribonucleoside is bound at residue G200. Residue H225 participates in Zn(2+) binding. A purine D-ribonucleoside is bound by residues E228, H252, and D309. D309 contacts Zn(2+).

Belongs to the metallo-dependent hydrolases superfamily. Adenosine and AMP deaminases family. Requires Zn(2+) as cofactor.

The enzyme catalyses adenosine + H2O + H(+) = inosine + NH4(+). It functions in the pathway purine metabolism; purine nucleoside salvage. Inhibited by coformycin but not by methylthiocoformycin (MT-coformycin). In terms of biological role, catalyzes the hydrolytic deamination of adenosine to produce inosine. Unlike other Plasmodium adenosine deaminases, does not catalyze the deamination of 5'-methylthioadenosine (MTA). Plays an essential role in the purine salvage pathway which allows the parasite to use host cell purines for the synthesis of nucleic acids. This chain is Adenosine deaminase, found in Plasmodium gallinaceum.